Consider the following 136-residue polypeptide: Probable glycine cleavage system H protein 3 (136 aa).

In terms of domain architecture, Lipoyl-binding spans 28-109 (MVTVGITSLG…PYDAWIVKIK (82 aa)). Lysine 69 carries the post-translational modification N6-lipoyllysine.

The protein belongs to the GcvH family. The glycine cleavage system is composed of four proteins: P, T, L and H. The cofactor is (R)-lipoate.

Functionally, the glycine cleavage system catalyzes the degradation of glycine. The H protein shuttles the methylamine group of glycine from the P protein to the T protein. The sequence is that of Probable glycine cleavage system H protein 3 from Sulfurisphaera tokodaii (strain DSM 16993 / JCM 10545 / NBRC 100140 / 7) (Sulfolobus tokodaii).